Here is a 101-residue protein sequence, read N- to C-terminus: Large ribosomal subunit protein uL24 (101 aa).

The protein belongs to the universal ribosomal protein uL24 family. In terms of assembly, part of the 50S ribosomal subunit.

Functionally, one of two assembly initiator proteins, it binds directly to the 5'-end of the 23S rRNA, where it nucleates assembly of the 50S subunit. In terms of biological role, one of the proteins that surrounds the polypeptide exit tunnel on the outside of the subunit. This Streptococcus thermophilus (strain CNRZ 1066) protein is Large ribosomal subunit protein uL24.